The sequence spans 602 residues: Protein SHORT-ROOT 1 (602 aa).

Residues 12–55 (AASEQQQQQQQSASYNSRSTTSSGSRSSSHQTNASYSYYHHSSN) show a composition bias toward low complexity. 3 disordered regions span residues 12–69 (AASE…YYYG), 101–145 (DFSS…TAAG), and 165–185 (DFSS…AVGG). Residues 56–68 (SGGGGGGGGGYYY) show a composition bias toward gly residues. A compositionally biased stretch (low complexity) spans 122-145 (PPASSTPTGTAPTPPLSTSSTAAG). Over residues 173–185 (SGGGTASSGAVGG) the composition is skewed to gly residues. One can recognise a GRAS domain in the interval 183 to 601 (VGGGGGGRWA…QPLVWASAWR (419 aa)). The interval 190 to 253 (RWASQLLLEC…LTASGPRTLR (64 aa)) is leucine repeat I (LRI). A VHIID region spans residues 272–349 (ALRFQELSPW…PHLSITTVVS (78 aa)). The short motif at 311–315 (FHILD) is the VHIID element. The segment at 365–401 (EIGQRMEKFARLMGVPFRFRAVHHSGDLAELDLDALD) is leucine repeat II (LRII). The PFYRE stretch occupies residues 411 to 517 (LAVNCVNSLR…ERGAGRAIVD (107 aa)). An SAW region spans residues 520–601 (SCPASESMER…QPLVWASAWR (82 aa)).

The protein belongs to the GRAS family. Interacts with SCR1. Interacts with SMOS1. As to expression, expressed in leaves and roots. Detected in the stele, the endodermis and part of the cortex.

The protein localises to the nucleus. Its function is as follows. Transcription factor required for the asymmetric cell division involved in radial pattern formation in roots. Essential for both cell division and cell specification. This chain is Protein SHORT-ROOT 1, found in Oryza sativa subsp. japonica (Rice).